The primary structure comprises 1295 residues: Serine protease sat autotransporter (1295 aa).

The first 49 residues, 1–49 (MNKIYSLKYSAATGGLIAVSELAKRVSGKTNRKLVATMLSLAVAGTVNA), serve as a signal peptide directing secretion. Residues 51–300 (NIDISNVWAR…TKYNDKLVSE (250 aa)) enclose the Peptidase S6 domain. Residues His121, Asp149, and Ser256 each act as charge relay system in the active site. In terms of domain architecture, Autotransporter spans 1029 to 1295 (DINGESGAWA…AINANFRYSF (267 aa)).

Cleaved to release the mature protein from the outer membrane.

It is found in the periplasm. The protein localises to the secreted. It localises to the cell surface. The protein resides in the cell outer membrane. Inhibited by phenylmethylsulfonyl fluoride and Pefabloc. Functionally, shows serine protease activity and displays cytophatic activity, including elongation, rounding, and detachment of a proportion of the cells from monolayer in culture. Triggers vacuolation within the cytoplasm of the human bladder and kidney cells. In Escherichia coli O6:H1 (strain CFT073 / ATCC 700928 / UPEC), this protein is Serine protease sat autotransporter (sat).